The sequence spans 233 residues: 2,3,4,5-tetrahydropyridine-2,6-dicarboxylate N-acetyltransferase (233 aa).

This sequence belongs to the transferase hexapeptide repeat family. DapH subfamily.

It catalyses the reaction (S)-2,3,4,5-tetrahydrodipicolinate + acetyl-CoA + H2O = L-2-acetamido-6-oxoheptanedioate + CoA. Its pathway is amino-acid biosynthesis; L-lysine biosynthesis via DAP pathway; LL-2,6-diaminopimelate from (S)-tetrahydrodipicolinate (acetylase route): step 1/3. Catalyzes the transfer of an acetyl group from acetyl-CoA to tetrahydrodipicolinate. This Thermosipho africanus (strain TCF52B) protein is 2,3,4,5-tetrahydropyridine-2,6-dicarboxylate N-acetyltransferase.